A 1205-amino-acid polypeptide reads, in one-letter code: Partitioning defective 3 homolog B (1205 aa).

Disordered regions lie at residues 83-104 (EPLHKIESPSGNPADRQSPDAF) and 137-165 (VRRSSDPVPGPPADTQPSASHPGGQSLKL). The residue at position 100 (S100) is a Phosphoserine. Residues 201 to 289 (TRTVEISGEG…SPSVLLHVLP (89 aa)) form the PDZ 1 domain. The disordered stretch occupies residues 318 to 374 (VPPPVHGKSGLKTANLTGTDSPETDASASLQQNKSPRVPRLGGKPSSPSLSPLMGFG). Residues 329–352 (KTANLTGTDSPETDASASLQQNKS) show a composition bias toward polar residues. Residues S346, S352, and S368 each carry the phosphoserine modification. Over residues 356–374 (PRLGGKPSSPSLSPLMGFG) the composition is skewed to low complexity. 2 PDZ domains span residues 383–468 (KIDL…VIAR) and 498–585 (EIPL…GMIQ). 7 positions are modified to phosphoserine: S635, S710, S728, S730, S746, S749, and S801. Positions 707–743 (ASKSMDLVPDESKVHSLAGQKSESPSKDFGPTLGLKK) are disordered. Disordered stretches follow at residues 784–921 (AIDK…KHQE) and 1111–1205 (PYYP…TAAV). Polar residues predominate over residues 806 to 822 (HSGQGALNCESAPQGNS). 2 stretches are compositionally biased toward basic and acidic residues: residues 838 to 865 (KEKEKKKEKGKLKVKEKKRKEENEDPER) and 881 to 921 (KKED…KHQE). A Phosphoserine modification is found at S1184.

It belongs to the PAR3 family. As to quaternary structure, interacts with PARD6B. Interacts with INSC/inscuteable. Highly expressed in kidney, lung and skeletal muscle. Expressed at intermediate levels in brain, heart, placenta, liver and pancreas. Isoform 1 is predominant, while isoform 2 and isoform 3 are expressed at lower levels.

It localises to the endomembrane system. It is found in the cell junction. The protein localises to the tight junction. Functionally, putative adapter protein involved in asymmetrical cell division and cell polarization processes. May play a role in the formation of epithelial tight junctions. The chain is Partitioning defective 3 homolog B (PARD3B) from Homo sapiens (Human).